The chain runs to 585 residues: Epithelial sodium channel subunit gamma (585 aa).

At 1–55 (MAPGEKIKAKIKKNLPVTGPQAPTIKELMRWYCLNTNTHGCRRIVVSRGRLRRLL) the chain is on the cytoplasmic side. Residues 56 to 76 (WIGFTLTAVALILWQCALLVF) form a helical membrane-spanning segment. Residues 77-477 (SFYTVSVSIK…GGQLGLWMSC (401 aa)) are Extracellular-facing. 6 cysteine pairs are disulfide-bonded: Cys-100–Cys-219, Cys-308–Cys-393, Cys-330–Cys-389, Cys-334–Cys-385, Cys-343–Cys-370, and Cys-345–Cys-359. Asn-207 carries an N-linked (GlcNAc...) asparagine glycan. A glycan (N-linked (GlcNAc...) asparagine) is linked at Asn-433. A helical membrane pass occupies residues 478 to 498 (SVVCVIEIIEVFFIDFFSIIA). Topologically, residues 499 to 585 (RRQWQKAKEW…LTDTQMLDEL (87 aa)) are cytoplasmic. Positions 513–534 (QAPPCPEAPRSPQGQDNPALDI) are disordered. The short motif at 559–563 (PPPKY) is the PY motif; recruits WW domain-containing proteins and is thereby required for ubiquitination and inhibition of the channel by NEDD4 and NEDD4L element.

The protein belongs to the amiloride-sensitive sodium channel (TC 1.A.6) family. SCNN1G subfamily. Component of the heterotrimeric epithelial sodium channel (ENaC) composed of an alpha/SCNN1A, a beta/SCNN1B and a gamma/SCNN1G subunit. An additional delta/SCNN1D subunit can replace the alpha/SCNN1A subunit to form an alternative channel with specific properties. Interacts with WWP1 (via WW domains). Interacts with WWP2 (via WW domains); inhibits the channel. Interacts with the full-length immature form of PCSK9 (pro-PCSK9); inhibits ENaC by promoting its proteasomal degradation. Interacts with BPIFA1; the interaction is indirect via SCNN1B and inhibits the proteolytic maturation of SCNN1A and SCNN1G and the activation of ENaC. In terms of processing, phosphorylated on serine and threonine residues. Aldosterone and insulin increase the basal level of phosphorylation. Ubiquitinated. Can be ubiquitinated at multiple sites and undergo monoubiquitination and polyubiquitination. Ubiquitination by NEDD4 or NEDD4L inhibits the ENaC channel through endocytosis, intracellular retention and degradation of its individual subunits. Post-translationally, ENaC is activated through the proteolytic maturation of its subunits. Furin cleaves the SCNN1G subunit first, followed by cleavage by prostasin (PRSS8), which results in a stepwise increase in the open probability of the channel due to the release of an inhibitory tract. BPIFA1, which is recruited by the SCNN1B subunit, prevents the proteolytic activation of ENaC. In terms of processing, N-glycosylated. N-linked glycans are processed to complex type during ENaC complex assembly and transport to the plasma membrane.

The protein resides in the apical cell membrane. The enzyme catalyses Na(+)(in) = Na(+)(out). With respect to regulation, originally identified and characterized by its inhibition by the diuretic drug amiloride. In terms of biological role, this is one of the three pore-forming subunits of the heterotrimeric epithelial sodium channel (ENaC), a critical regulator of sodium balance and fluid homeostasis. ENaC operates in epithelial tissues, where it mediates the electrodiffusion of sodium ions from extracellular fluid through the apical membrane of cells, with water following osmotically. It plays a key role in maintaining sodium homeostasis through electrogenic sodium reabsorption in the kidneys. Additionally, ENaC is essential for airway surface liquid homeostasis, which is crucial for proper mucus clearance. The chain is Epithelial sodium channel subunit gamma from Pan troglodytes (Chimpanzee).